Consider the following 224-residue polypeptide: PKHD-type hydroxylase Shewana3_0717 (224 aa).

The region spanning 78 to 176 is the Fe2OG dioxygenase domain; sequence QFYPPLFNRY…RTAAFMWLQS (99 aa). Histidine 96, aspartate 98, and histidine 157 together coordinate Fe cation. A 2-oxoglutarate-binding site is contributed by arginine 167.

The cofactor is Fe(2+). L-ascorbate is required as a cofactor.

The chain is PKHD-type hydroxylase Shewana3_0717 from Shewanella sp. (strain ANA-3).